Consider the following 3942-residue polypeptide: Protein bassoon (3942 aa).

Positions 1 to 158 (MGNEASLEGG…PTSPYSVPQI (158 aa)) are disordered. Gly2 is lipidated: N-myristoyl glycine. Positions 9–29 (GGAGEGPLPPGGSGLGPGPGA) are enriched in gly residues. Low complexity predominate over residues 31–52 (KPPSALAGGGQLPVAGAARAAG). The segment covering 53–71 (PPTPGLGPVPGPGPGPGPG) has biased composition (pro residues). The segment at 62-71 (PGPGPGPGPG) is 5 X 2 AA tandem repeats of P-G. Polar residues-rich tracts occupy residues 85 to 98 (SQRT…QASA) and 127 to 154 (QVDS…SPYS). Position 142 is a phosphoserine (Ser142). Arg145 carries the omega-N-methylarginine modification. 2 C4-type zinc fingers span residues 167–190 (CPIC…CTQC) and 195–217 (CNQC…CLNC). 2 disordered regions span residues 228 to 341 (TTAP…EQTQ) and 362 to 457 (LMSV…KTMP). The segment covering 230-240 (APRSKSQQQLH) has biased composition (polar residues). Residues Ser241 and Ser245 each carry the phosphoserine modification. Over residues 362–379 (LMSVQPEADTQGQPSPSK) the composition is skewed to polar residues. Pro residues predominate over residues 395-407 (PRPPGSGPGPGPT). 2 C4-type zinc fingers span residues 464 to 487 (CPLC…CTAC) and 492 to 514 (CNLC…CLNC). Disordered regions lie at residues 525–937 (GEPA…LQGG), 950–1258 (GSYG…VAES), 1309–1553 (MDPM…WQQS), and 1573–1625 (RMVH…PSAG). Positions 528-541 (APLPLPTPQQPPAG) are enriched in pro residues. Repeat copies occupy residues 570-576 (KASPQAT), 577-583 (KASPQAT), 584-590 (KASPQAT), 591-597 (KASPQTT), and 598-604 (KASPQAK). Residues 570-604 (KASPQATKASPQATKASPQATKASPQTTKASPQAK) are 5 X 7 AA tandem repeats of K-A-S-P-Q-[AT]-[AT]. Positions 573–600 (PQATKASPQATKASPQATKASPQTTKAS) are enriched in polar residues. A compositionally biased stretch (pro residues) spans 632–645 (VPKPPPETTVPPGT). Residues 684–693 (QDLSRSPQSL) show a composition bias toward polar residues. Positions 694 to 708 (SDTGYSSDGVSSSQS) are enriched in low complexity. The segment covering 709-718 (EITGVVQQEV) has biased composition (polar residues). Composition is skewed to acidic residues over residues 787-802 (FDSD…EDDS) and 865-876 (SAEEDNLEEDDT). Arg881 is modified (omega-N-methylarginine). Positions 895-905 (PRPESSQEPKR) are enriched in basic and acidic residues. The residue at position 980 (Ser980) is a Phosphoserine. The span at 994–1011 (PASTPSYTSGTSPTSLSS) shows a compositional bias: low complexity. Acidic residues predominate over residues 1049–1062 (DSSEEEELREEEEL). Phosphoserine occurs at positions 1050 and 1051. The segment covering 1063-1076 (LREQEKMREVEQQR) has biased composition (basic and acidic residues). Residue Ser1100 is modified to Phosphoserine. The residue at position 1102 (Thr1102) is a Phosphothreonine. 2 positions are modified to phosphoserine: Ser1108 and Ser1114. Positions 1117–1132 (EELRQAAEMEELHRSS) are enriched in basic and acidic residues. Composition is skewed to low complexity over residues 1133–1143 (CSEYSPSPSLD) and 1173–1190 (SPTE…SGRP). The segment covering 1192-1207 (KSAEEAYEDMMRKAEM) has biased composition (basic and acidic residues). Positions 1209–1219 (QRQQGQVAGAR) are enriched in low complexity. The span at 1226–1240 (SQPTGPRSQGSFEYQ) shows a compositional bias: polar residues. Ser1236 carries the post-translational modification Phosphoserine. Residues 1333 to 1343 (SFSTSTSSDSS) show a composition bias toward low complexity. Residue Thr1354 is glycosylated (O-linked (GlcNAc) threonine). Residues 1357–1366 (FAKEPQDPLK) show a composition bias toward basic and acidic residues. A compositionally biased stretch (polar residues) spans 1370-1438 (SPVSSTLTSK…TTANYGSQTE (69 aa)). O-linked (GlcNAc) threonine glycosylation is present at Thr1395. 3 positions are modified to phosphoserine: Ser1482, Ser1491, and Ser1493. Residues 1488-1498 (STPSESPTFSP) show a composition bias toward low complexity. 2 stretches are compositionally biased toward polar residues: residues 1508 to 1522 (EFST…SSDI) and 1573 to 1609 (RMVH…SQMP). O-linked (GlcNAc) serine glycosylation occurs at Ser1707. 2 positions are modified to omega-N-methylarginine: Arg1792 and Arg1796. Arg1806 carries the asymmetric dimethylarginine; alternate modification. Arg1806 is subject to Omega-N-methylarginine; alternate. Residue Arg1818 is modified to Omega-N-methylarginine. Disordered stretches follow at residues 1831–1865 (GVGL…TRKP) and 1926–1977 (PSAP…QRPY). The segment covering 1844–1856 (AEPHRATPAELRS) has biased composition (basic and acidic residues). O-linked (GlcNAc) threonine glycosylation occurs at Thr1934. Phosphoserine is present on residues Ser1990 and Ser2046. Omega-N-methylarginine occurs at positions 2051 and 2081. An asymmetric dimethylarginine mark is found at Arg2255, Arg2265, and Arg2270. Thr2318 carries O-linked (GlcNAc) threonine glycosylation. 3 disordered regions span residues 2327-2378 (PVAP…KQQE), 2476-2504 (EQKQ…TELA), and 2524-2663 (TEGP…STTA). Positions 2329 to 2342 (APAPGPAPAPPPGQ) are enriched in pro residues. Residues 2361–2378 (ASEKEEASQEDRQRKQQE) are compositionally biased toward basic and acidic residues. 2 coiled-coil regions span residues 2366-2422 (EASQ…LVQR) and 2453-2483 (LAQQ…RQKA). O-linked (GlcNAc) threonine glycosylation occurs at Thr2524. Positions 2541-2551 (SSASDMSLQTE) are enriched in polar residues. Position 2578 is a phosphoserine (Ser2578). Residues Thr2595 and Thr2622 each carry the phosphothreonine modification. Residues 2643-2655 (RHSDSGSDSKHDA) show a composition bias toward basic and acidic residues. Thr2700 is a glycosylation site (O-linked (GlcNAc) threonine). The segment at 2730–3278 (EPDGQAQGVA…GGVSGRPGKD (549 aa)) is interaction with DAO. Residues Ser2811, Ser2860, and Ser2866 each carry the phosphoserine modification. A disordered region spans residues 2854-2874 (TLQRSLSDPKPLSPTAEESAK). Thr2945 carries an O-linked (GlcNAc) threonine glycan. Ser3022 is subject to Phosphoserine. Disordered regions lie at residues 3051–3409 (PATP…LTSR), 3431–3560 (YYGV…PRAH), and 3581–3917 (EAYH…KILP). Positions 3073-3083 (TAGSSGPTQNG) are enriched in polar residues. A compositionally biased stretch (low complexity) spans 3089–3114 (APTYTGPSTYPAPTYPPGTGYPAEPG). Positions 3202–3211 (KAPEHPRGSD) are enriched in basic and acidic residues. Residues 3212–3237 (RSSVSQSPAPTYPSDSHYTSLEQNVP) show a composition bias toward polar residues. Ser3301 bears the Phosphoserine mark. Composition is skewed to basic and acidic residues over residues 3330 to 3342 (GDSD…RADK) and 3372 to 3391 (QGME…KDVE). Ser3382 is modified (phosphoserine). Over residues 3447–3461 (YGSSSRSRMASAYSG) the composition is skewed to low complexity. Residues 3464–3487 (LSSHDYSSRGKGYERERDTAERLQ) are compositionally biased toward basic and acidic residues. At Arg3502 the chain carries Omega-N-methylarginine. Residues 3520–3534 (PLGRPRPAGGALPPG) show a composition bias toward low complexity. Basic and acidic residues-rich tracts occupy residues 3549 to 3560 (VQEHVKDGPRAH) and 3592 to 3602 (WFDKPRDARSD). Over residues 3652-3665 (EHRHHSDHGRHSGR) the composition is skewed to basic residues. Basic and acidic residues predominate over residues 3666-3690 (HAGEEPGRRAAKPHARDMGRHEARP). Over residues 3750–3820 (TQAQPQMQGR…QARLQPQSQP (71 aa)) the composition is skewed to low complexity. An Omega-N-methylarginine modification is found at Arg3823. A compositionally biased stretch (pro residues) spans 3835–3851 (KPQPGPTTAPGPQPAGP). Residues 3856–3891 (QASSSKPPAAKAPQQGRAPQAQTTPGPGPAGAKPGA) show a composition bias toward low complexity.

In terms of assembly, interacts with PCLO, ERC2/CAST1, RIMS1 and UNC13A. Interacts with TPRG1L. Interacts with DYNLL1 and DYNLL2; these interactions potentially link PTVs to dynein and myosin V motor complexes. Interacts with ATG5; this interaction is important for the regulation of presynaptic autophagy. Interacts (via C-terminus) with TRIO (via N-terminus). Interacts with CTBP1. Interacts with SIAH1; this interaction negatively regulates SIAH1 E3 ligase activity. Interacts (via coiled region) with DAO; the interaction is direct. Post-translationally, myristoylated. The N-terminal myristoylation is not sufficient for presynaptic localization. Expressed in brain and retina.

It is found in the cytoplasm. The protein localises to the presynaptic active zone. The protein resides in the cytoskeleton. It localises to the cytoplasmic vesicle. Its subcellular location is the secretory vesicle. It is found in the synaptic vesicle membrane. Functionally, scaffold protein of the presynaptic cytomatrix at the active zone (CAZ) which is the place in the synapse where neurotransmitter is released. After synthesis, participates in the formation of Golgi-derived membranous organelles termed Piccolo-Bassoon transport vesicles (PTVs) that are transported along axons to sites of nascent synaptic contacts. At the presynaptic active zone, regulates the spatial organization of synaptic vesicle cluster, the protein complexes that execute membrane fusion and compensatory endocytosis. Also functions in processes other than assembly such as the regulation of specific presynaptic protein ubiquitination by interacting with SIAH1 or the regulation of presynaptic autophagy by associating with ATG5. Also mediates synapse to nucleus communication leading to reconfiguration of gene expression by associating with the transcriptional corepressor CTBP1 and by subsequently reducing the size of its pool available for nuclear import. Inhibits the activity of the proportion of DAO enzyme that localizes to the presynaptic active zone, which may modulate synaptic transmission. The chain is Protein bassoon from Mus musculus (Mouse).